The following is a 307-amino-acid chain: 4-diphosphocytidyl-2-C-methyl-D-erythritol kinase (307 aa).

Lys14 is a catalytic residue. ATP is bound at residue 107 to 117 (PVAGGMAGGSA). Asp149 is an active-site residue.

The protein belongs to the GHMP kinase family. IspE subfamily.

The enzyme catalyses 4-CDP-2-C-methyl-D-erythritol + ATP = 4-CDP-2-C-methyl-D-erythritol 2-phosphate + ADP + H(+). Its pathway is isoprenoid biosynthesis; isopentenyl diphosphate biosynthesis via DXP pathway; isopentenyl diphosphate from 1-deoxy-D-xylulose 5-phosphate: step 3/6. In terms of biological role, catalyzes the phosphorylation of the position 2 hydroxy group of 4-diphosphocytidyl-2C-methyl-D-erythritol. The sequence is that of 4-diphosphocytidyl-2-C-methyl-D-erythritol kinase from Thermobifida fusca (strain YX).